Consider the following 459-residue polypeptide: Bifunctional protein GlmU (459 aa).

Positions 1-229 (MTNYAIILAA…FDESLGVNDR (229 aa)) are pyrophosphorylase. UDP-N-acetyl-alpha-D-glucosamine is bound by residues 8-11 (LAAG), K22, Q72, and 77-78 (GT). Residue D102 coordinates Mg(2+). UDP-N-acetyl-alpha-D-glucosamine is bound by residues G139, E154, N169, and N227. N227 contacts Mg(2+). Positions 230–250 (VALATAESVMRRRINQKHMVN) are linker. An N-acetyltransferase region spans residues 251-459 (GVSFVNPDAT…KRLPHHPQNK (209 aa)). The UDP-N-acetyl-alpha-D-glucosamine site is built by R332 and K350. The active-site Proton acceptor is the H362. UDP-N-acetyl-alpha-D-glucosamine contacts are provided by Y365 and N376. Residues A379, 385–386 (NY), S404, A422, and R439 each bind acetyl-CoA.

In the N-terminal section; belongs to the N-acetylglucosamine-1-phosphate uridyltransferase family. The protein in the C-terminal section; belongs to the transferase hexapeptide repeat family. Homotrimer. It depends on Mg(2+) as a cofactor.

It is found in the cytoplasm. It catalyses the reaction alpha-D-glucosamine 1-phosphate + acetyl-CoA = N-acetyl-alpha-D-glucosamine 1-phosphate + CoA + H(+). The enzyme catalyses N-acetyl-alpha-D-glucosamine 1-phosphate + UTP + H(+) = UDP-N-acetyl-alpha-D-glucosamine + diphosphate. It participates in nucleotide-sugar biosynthesis; UDP-N-acetyl-alpha-D-glucosamine biosynthesis; N-acetyl-alpha-D-glucosamine 1-phosphate from alpha-D-glucosamine 6-phosphate (route II): step 2/2. Its pathway is nucleotide-sugar biosynthesis; UDP-N-acetyl-alpha-D-glucosamine biosynthesis; UDP-N-acetyl-alpha-D-glucosamine from N-acetyl-alpha-D-glucosamine 1-phosphate: step 1/1. It functions in the pathway bacterial outer membrane biogenesis; LPS lipid A biosynthesis. In terms of biological role, catalyzes the last two sequential reactions in the de novo biosynthetic pathway for UDP-N-acetylglucosamine (UDP-GlcNAc). The C-terminal domain catalyzes the transfer of acetyl group from acetyl coenzyme A to glucosamine-1-phosphate (GlcN-1-P) to produce N-acetylglucosamine-1-phosphate (GlcNAc-1-P), which is converted into UDP-GlcNAc by the transfer of uridine 5-monophosphate (from uridine 5-triphosphate), a reaction catalyzed by the N-terminal domain. The protein is Bifunctional protein GlmU of Streptococcus gordonii (strain Challis / ATCC 35105 / BCRC 15272 / CH1 / DL1 / V288).